The chain runs to 247 residues: Cytochrome c oxidase subunit 2 (247 aa).

The Mitochondrial intermembrane portion of the chain corresponds to 12-38; the sequence is DVPTPWGLYFQDSSTPNQEGIIELHDN. The chain crosses the membrane as a helical span at residues 39 to 59; that stretch reads IMFYLVLILCTVSWLLFSIVK. Topologically, residues 60 to 78 are mitochondrial matrix; that stretch reads DSSKNPLPHKYLVHGQTIE. The chain crosses the membrane as a helical span at residues 79-101; it reads IIWTILPAVVLLIIAFPSFILLY. Topologically, residues 102–247 are mitochondrial intermembrane; that stretch reads LCDEVISPAM…KEFLTWLNEQ (146 aa). Cu cation is bound by residues His-182, Cys-217, Glu-219, Cys-221, His-225, and Met-228. Position 219 (Glu-219) interacts with Mg(2+).

It belongs to the cytochrome c oxidase subunit 2 family. Component of the cytochrome c oxidase (complex IV, CIV), a multisubunit enzyme composed of a catalytic core of 3 subunits and several supernumerary subunits. The complex exists as a monomer or a dimer and forms supercomplexes (SCs) in the inner mitochondrial membrane with ubiquinol-cytochrome c oxidoreductase (cytochrome b-c1 complex, complex III, CIII). Requires Cu cation as cofactor. The signal sequence of COX2 is processed by IMP1.

It localises to the mitochondrion inner membrane. The enzyme catalyses 4 Fe(II)-[cytochrome c] + O2 + 8 H(+)(in) = 4 Fe(III)-[cytochrome c] + 2 H2O + 4 H(+)(out). Functionally, component of the cytochrome c oxidase, the last enzyme in the mitochondrial electron transport chain which drives oxidative phosphorylation. The respiratory chain contains 3 multisubunit complexes succinate dehydrogenase (complex II, CII), ubiquinol-cytochrome c oxidoreductase (cytochrome b-c1 complex, complex III, CIII) and cytochrome c oxidase (complex IV, CIV), that cooperate to transfer electrons derived from NADH and succinate to molecular oxygen, creating an electrochemical gradient over the inner membrane that drives transmembrane transport and the ATP synthase. Cytochrome c oxidase is the component of the respiratory chain that catalyzes the reduction of oxygen to water. Electrons originating from reduced cytochrome c in the intermembrane space (IMS) are transferred via the dinuclear copper A center (CU(A)) of subunit 2 and heme A of subunit 1 to the active site in subunit 1, a binuclear center (BNC) formed by heme A3 and copper B (CU(B)). The BNC reduces molecular oxygen to 2 water molecules using 4 electrons from cytochrome c in the IMS and 4 protons from the mitochondrial matrix. The protein is Cytochrome c oxidase subunit 2 (COX2) of Cyberlindnera saturnus (Yeast).